The following is a 344-amino-acid chain: MKDLGAEHLAGHEGVQLLGLLNVYLEQEERFQPREKGLSLIEATPENDNTLCPGLRNAKVEDLRSLANFFGSCTETFVLAVNILDRFLALMKVKPKHLSCIGVCSFLLAARIVEEDCNIPSTHDVIRISQCKCTASDIKRMEKIISEKLHYELEATTALNFLHLYHTIILCHTSERKEILSLDKLEAQLKACNCRLIFSKAKPSVLALCLLNLEVETLKSVELLEILLLVKKHSKINDTEFFYWRELVSKCLAEYSSPECCKPDLKKLVWIVSRRTAQNLHNSYYSVPELPTIPEGGCFDESESEDSCEDMSCGEESLSSSPPSDQECTFFFNFKVAQTLCFPS.

The span at 301-313 (ESESEDSCEDMSC) shows a compositional bias: acidic residues. Residues 301–320 (ESESEDSCEDMSCGEESLSS) form a disordered region.

This sequence belongs to the cyclin family. Cyclin G subfamily. As to expression, high levels in cerebellum, thymus, spleen and prostate. Low levels in skeletal muscle.

It localises to the cytoplasm. Functionally, may play a role in growth regulation and in negative regulation of cell cycle progression. The protein is Cyclin-G2 (CCNG2) of Homo sapiens (Human).